We begin with the raw amino-acid sequence, 439 residues long: Glutamate--tRNA ligase 2 (439 aa).

Positions 6-16 match the 'HIGH' region motif; the sequence is PSPTGDMHIGN. Residues 232–236 carry the 'KMSKS' region motif; it reads KMSKR. Position 235 (lysine 235) interacts with ATP.

The protein belongs to the class-I aminoacyl-tRNA synthetase family. Glutamate--tRNA ligase type 1 subfamily. As to quaternary structure, monomer.

It localises to the cytoplasm. The enzyme catalyses tRNA(Glu) + L-glutamate + ATP = L-glutamyl-tRNA(Glu) + AMP + diphosphate. Catalyzes the attachment of glutamate to tRNA(Glu) in a two-step reaction: glutamate is first activated by ATP to form Glu-AMP and then transferred to the acceptor end of tRNA(Glu). The polypeptide is Glutamate--tRNA ligase 2 (Helicobacter pylori (strain P12)).